Reading from the N-terminus, the 1529-residue chain is Mediator of RNA polymerase II transcription subunit 1.1 (1529 aa).

Disordered regions lie at residues 685–740 (PDAA…VVGE), 807–919 (QYRM…MRDN), and 933–1529 (PDIE…IDDE). Residues 693–702 (GKQRKPRAKK) show a composition bias toward basic residues. Composition is skewed to low complexity over residues 722–739 (GAAAVGAGSGRKSSGVVG) and 807–828 (QYRMHMQQQQLQQQQMQSPQQQ). Residues 894–905 (TPSPLSAPPKPF) show a composition bias toward pro residues. Residues 908–919 (EQHHFGTKMRDN) are compositionally biased toward basic and acidic residues. Low complexity-rich tracts occupy residues 958 to 990 (SSSSDPSTSGESSNATESASSAPLMKPPTTAQT) and 1008 to 1023 (QEQALQKQEQQRIQQQ). The stretch at 1008–1032 (QEQALQKQEQQRIQQQDSVDSTNSE) forms a coiled coil. Composition is skewed to polar residues over residues 1051–1061 (NQVNRVMNMSN), 1068–1089 (GSSTNTSDIKPSLASLQKSTGS), and 1096–1105 (TPGTSSNIAQ). Basic and acidic residues-rich tracts occupy residues 1113–1130 (LKKEVEEQPPEREKEKLI), 1137–1185 (LKVD…ERDK), 1192–1240 (RDRT…KELS), and 1262–1278 (PKKDTVDEDKKEPKDES). Residues 1169–1202 (EKEDKSQREKDKKERDKERKRRDRDRTEAKKEKD) are a coiled coil. Over residues 1279 to 1288 (IPGPSTSSES) the composition is skewed to low complexity. Basic and acidic residues predominate over residues 1289-1304 (STRKEVAPAPISRKES). Positions 1349 to 1365 (SYSGSSNAGPISSSSRG) are enriched in low complexity. Pro residues-rich tracts occupy residues 1375-1386 (PVLPPPALPMRG) and 1477-1500 (QPPPPPQMIPLPKENPPPPLAPPS).

This sequence belongs to the Mediator complex subunit 1 family. Component of the Mediator complex.

The protein resides in the nucleus. Component of the Mediator complex, a coactivator involved in the regulated transcription of nearly all RNA polymerase II-dependent genes. Mediator functions as a bridge to convey information from gene-specific regulatory proteins to the basal RNA polymerase II transcription machinery. Mediator is recruited to promoters by direct interactions with regulatory proteins and serves as a scaffold for the assembly of a functional preinitiation complex with RNA polymerase II and the general transcription factors. The protein is Mediator of RNA polymerase II transcription subunit 1.1 (sop-3) of Caenorhabditis briggsae.